The sequence spans 554 residues: Acetyl-S-ACP:malonate ACP transferase (554 aa).

Its subcellular location is the cytoplasm. The catalysed reaction is acetyl-[ACP] + malonate = malonyl-[ACP] + acetate. Alpha subunit of the biotin-independent and biotin-dependent malonate decarboxylase multienzyme complex (EC 4.1.1.88 and EC 7.2.4.4, respectively). Acts as an acyl-carrier protein (ACP) transferase component. This first step in malonate decarboxylation involves the exchange of an acetyl thioester residue bound to the activated ACP subunit for a malonyl thioester residue. Has a weak activity with acetyl-CoA as substrate. The protein is Acetyl-S-ACP:malonate ACP transferase (madA) of Malonomonas rubra.